The primary structure comprises 239 residues: Small ribosomal subunit protein uS2 (239 aa).

This sequence belongs to the universal ribosomal protein uS2 family.

The polypeptide is Small ribosomal subunit protein uS2 (Francisella tularensis subsp. tularensis (strain FSC 198)).